The primary structure comprises 161 residues: Nucleotide-binding protein Tbd_1846 (161 aa).

The protein belongs to the YajQ family.

In terms of biological role, nucleotide-binding protein. In Thiobacillus denitrificans (strain ATCC 25259 / T1), this protein is Nucleotide-binding protein Tbd_1846.